Here is a 204-residue protein sequence, read N- to C-terminus: Holliday junction branch migration complex subunit RuvA (204 aa).

The segment at 1–64 (MIGKLKGTID…EDQLKLFGFM (64 aa)) is domain I. Residues 65–143 (TALEREWFNL…AYAGEAINIA (79 aa)) form a domain II region. The segment at 144–151 (LKRELGEG) is flexible linker. The interval 152–204 (VAAAPVADAVSALTNLGYSRDQAANAVAAAMKTAGEGADSAKLIRLGLKELAR) is domain III.

Belongs to the RuvA family. As to quaternary structure, homotetramer. Forms an RuvA(8)-RuvB(12)-Holliday junction (HJ) complex. HJ DNA is sandwiched between 2 RuvA tetramers; dsDNA enters through RuvA and exits via RuvB. An RuvB hexamer assembles on each DNA strand where it exits the tetramer. Each RuvB hexamer is contacted by two RuvA subunits (via domain III) on 2 adjacent RuvB subunits; this complex drives branch migration. In the full resolvosome a probable DNA-RuvA(4)-RuvB(12)-RuvC(2) complex forms which resolves the HJ.

It localises to the cytoplasm. Its function is as follows. The RuvA-RuvB-RuvC complex processes Holliday junction (HJ) DNA during genetic recombination and DNA repair, while the RuvA-RuvB complex plays an important role in the rescue of blocked DNA replication forks via replication fork reversal (RFR). RuvA specifically binds to HJ cruciform DNA, conferring on it an open structure. The RuvB hexamer acts as an ATP-dependent pump, pulling dsDNA into and through the RuvAB complex. HJ branch migration allows RuvC to scan DNA until it finds its consensus sequence, where it cleaves and resolves the cruciform DNA. The chain is Holliday junction branch migration complex subunit RuvA from Rhizobium etli (strain ATCC 51251 / DSM 11541 / JCM 21823 / NBRC 15573 / CFN 42).